We begin with the raw amino-acid sequence, 242 residues long: Venom nerve growth factor 3 (242 aa).

The signal sequence occupies residues 1–18; that stretch reads MSMLCYTLIIAFLIGIWA. Residues 19 to 125 constitute a propeptide that is removed on maturation; sequence APQSEDNVPL…ALNRNIQAKR (107 aa). Residues 45–69 are disordered; it reads HEGLKTSRNTDQRHPAPKKVDDQEP. Over residues 46–66 the composition is skewed to basic and acidic residues; it reads EGLKTSRNTDQRHPAPKKVDD. 3 disulfide bridges follow: cysteine 139/cysteine 203, cysteine 181/cysteine 231, and cysteine 191/cysteine 233.

The protein belongs to the NGF-beta family. As to quaternary structure, homodimer; non-covalently linked. Expressed by the venom gland.

The protein resides in the secreted. Nerve growth factor is important for the development and maintenance of the sympathetic and sensory nervous systems. It stimulates division and differentiation of sympathetic and embryonic sensory neurons as well as basal forebrain cholinergic neurons in the brain. Its relevance in the snake venom is not clear. However, it has been shown to inhibit metalloproteinase-dependent proteolysis of platelet glycoprotein Ib alpha, suggesting a metalloproteinase inhibition to prevent metalloprotease autodigestion and/or protection against prey proteases. Binds a lipid between the two protein chains in the homodimer. The lipid-bound form promotes histamine relase from mouse mast cells, contrary to the lipid-free form. This chain is Venom nerve growth factor 3, found in Pseudechis australis (Mulga snake).